Here is a 266-residue protein sequence, read N- to C-terminus: Protein crossbronx-like (266 aa).

The UBC core domain occupies 15-178; it reads KQGYHILAEY…VQEQAIASRN (164 aa).

This sequence belongs to the ubiquitin-conjugating enzyme family. FTS subfamily.

The chain is Protein crossbronx-like from Drosophila erecta (Fruit fly).